Consider the following 479-residue polypeptide: RHO1 GEF localizing protein 1 (479 aa).

Positions S460–Q479 are disordered.

Functionally, regulator of RHO1 signaling that acts as a cofactor required for the efficient localization of the TUS1 GTP exchange factor (GEF) for RHO1 to the bud neck during all phases of cytokinesis. RHO1 is a key, essential hub protein in the cell wall integrity (CWI) pathway in which activated RHO1-GTP binds directly to and activates multiple different downstream effectors required for cell wall synthesis and actin assembly during cytokinesis. The polypeptide is RHO1 GEF localizing protein 1 (Saccharomyces cerevisiae (strain ATCC 204508 / S288c) (Baker's yeast)).